The following is a 179-amino-acid chain: Large ribosomal subunit protein uL10 (179 aa).

The protein belongs to the universal ribosomal protein uL10 family. As to quaternary structure, part of the ribosomal stalk of the 50S ribosomal subunit. The N-terminus interacts with L11 and the large rRNA to form the base of the stalk. The C-terminus forms an elongated spine to which L12 dimers bind in a sequential fashion forming a multimeric L10(L12)X complex.

Functionally, forms part of the ribosomal stalk, playing a central role in the interaction of the ribosome with GTP-bound translation factors. This chain is Large ribosomal subunit protein uL10, found in Thermomicrobium roseum (strain ATCC 27502 / DSM 5159 / P-2).